We begin with the raw amino-acid sequence, 709 residues long: Golgin-84 (709 aa).

The Cytoplasmic portion of the chain corresponds to 1–664; sequence MASWLKVAED…RATRFLWRHP (664 aa). 3 disordered regions span residues 24–132, 144–195, and 211–265; these read TELS…VVDR, EVEV…NQDA, and EVIH…DQLE. Residues 29–43 show a composition bias toward low complexity; sequence EQSSPQPSGSSSQEG. Over residues 78-89 the composition is skewed to basic and acidic residues; that stretch reads PPRERIKIEKIR. The span at 94 to 113 shows a compositional bias: low complexity; the sequence is VDSSSVDASASKPDVSSSDV. Basic and acidic residues predominate over residues 114–132; the sequence is KGLDDDGGAEKEEKVVVDR. The span at 162–180 shows a compositional bias: low complexity; that stretch reads DGAADSGNSEGAAESSAPS. Composition is skewed to basic and acidic residues over residues 211-222 and 248-265; these read EVIHEKNIKEVP and QQEHKLDSGSVKDQDQLE. Residues 287–592 are a coiled coil; sequence RVCAGLSSRL…AALEFQLEKS (306 aa). Residues 665–684 traverse the membrane as a helical; Signal-anchor for type II membrane protein segment; the sequence is VARVSLLFYLVFVHLFLMYL. Topologically, residues 685-707 are lumenal; the sequence is MHRLQDFASREGPTAMGGLANSD.

The protein localises to the golgi apparatus membrane. May be involved in maintaining Golgi structure and in intra-Golgi transport. This is Golgin-84 from Oryza sativa subsp. japonica (Rice).